The primary structure comprises 108 residues: UPF0145 protein LGAS_1099 (108 aa).

It belongs to the UPF0145 family.

This Lactobacillus gasseri (strain ATCC 33323 / DSM 20243 / BCRC 14619 / CIP 102991 / JCM 1131 / KCTC 3163 / NCIMB 11718 / NCTC 13722 / AM63) protein is UPF0145 protein LGAS_1099.